Consider the following 285-residue polypeptide: SLAM family member 9 (285 aa).

The signal sequence occupies residues 1–17 (MGALLWSLLLLLQEAKG). The Extracellular segment spans residues 18-232 (FSGDDEDPEE…YPEKPSMLCL (215 aa)). One can recognise an Ig-like V-type domain in the interval 25-126 (PEEVIGVLQE…SHITKSYHLR (102 aa)). Residues Asn37, Asn97, Asn141, Asn149, Asn175, and Asn206 are each glycosylated (N-linked (GlcNAc...) asparagine). Residues 134–213 (PHITVNSNIS…VSNISSRRIS (80 aa)) form the Ig-like C2-type domain. A disulfide bridge connects residues Cys154 and Cys198. Residues 233–253 (LVKSLFLLLLLAILTVGLCLF) traverse the membrane as a helical segment. Residues 254–285 (RAQKSYETPRVRKLKRNRIKLRKKGKSGPTPV) lie on the Cytoplasmic side of the membrane.

The protein localises to the membrane. May play a role in the immune response. This is SLAM family member 9 (Slamf9) from Mus musculus (Mouse).